The chain runs to 404 residues: Tripartite motif-containing 13 (404 aa).

The RING-type zinc finger occupies 10–56 (CPICCCLFEDPRVLPCSHSFCKKCLEGILDGNRSPTWRPPFKCPTCR). A B box-type zinc finger spans residues 87–129 (PRMSQCRVHSGQPLNIFCATDLKLICGFCATTGDHKGHKFCAL). The Zn(2+) site is built by cysteine 92, histidine 95, cysteine 115, and histidine 121. The helical transmembrane segment at 102-119 (IFCATDLKLICGFCATTG) threads the bilayer. Residues 186–236 (KLLRTLEHKRSEILSDLETLKLAVMQTFDPEINRLRSALEEQRRALNIAES) adopt a coiled-coil conformation.

Its subcellular location is the endoplasmic reticulum membrane. Its pathway is protein modification; protein ubiquitination. Functionally, E3 ubiquitin ligase involved in the retrotranslocation and turnover of membrane and secretory proteins from the ER through a set of processes named ER-associated degradation (ERAD). This process acts on misfolded proteins as well as in the regulated degradation of correctly folded proteins. The protein is Tripartite motif-containing 13 (trim13) of Danio rerio (Zebrafish).